Here is a 599-residue protein sequence, read N- to C-terminus: Elongation factor 4 (599 aa).

The tr-type G domain occupies 5-187; it reads SHIRNFSIIA…RLVTVIPAPE (183 aa). GTP-binding positions include 17 to 22 and 134 to 137; these read DHGKST and NKMD.

The protein belongs to the TRAFAC class translation factor GTPase superfamily. Classic translation factor GTPase family. LepA subfamily.

The protein resides in the cell inner membrane. The catalysed reaction is GTP + H2O = GDP + phosphate + H(+). Required for accurate and efficient protein synthesis under certain stress conditions. May act as a fidelity factor of the translation reaction, by catalyzing a one-codon backward translocation of tRNAs on improperly translocated ribosomes. Back-translocation proceeds from a post-translocation (POST) complex to a pre-translocation (PRE) complex, thus giving elongation factor G a second chance to translocate the tRNAs correctly. Binds to ribosomes in a GTP-dependent manner. This chain is Elongation factor 4, found in Pseudomonas paraeruginosa (strain DSM 24068 / PA7) (Pseudomonas aeruginosa (strain PA7)).